The sequence spans 156 residues: Transcription elongation factor GreA (156 aa).

Residues 46–73 (AEYHAAREKQSFIEGRIKELEALLSLAE) adopt a coiled-coil conformation.

It belongs to the GreA/GreB family.

Functionally, necessary for efficient RNA polymerase transcription elongation past template-encoded arresting sites. The arresting sites in DNA have the property of trapping a certain fraction of elongating RNA polymerases that pass through, resulting in locked ternary complexes. Cleavage of the nascent transcript by cleavage factors such as GreA or GreB allows the resumption of elongation from the new 3'terminus. GreA releases sequences of 2 to 3 nucleotides. The protein is Transcription elongation factor GreA of Cereibacter sphaeroides (strain ATCC 17025 / ATH 2.4.3) (Rhodobacter sphaeroides).